The chain runs to 213 residues: Large ribosomal subunit protein eL14 (213 aa).

An N6-acetyllysine modification is found at Lys79. Position 85 is an N6-acetyllysine; alternate (Lys85). Residue Lys85 is modified to N6-succinyllysine; alternate. Residue Lys124 forms a Glycyl lysine isopeptide (Lys-Gly) (interchain with G-Cter in SUMO2) linkage. At Ser139 the chain carries Phosphoserine. Residues 166-213 (TAGKKAPAQKAPAQKAAGQKAAPPPKAQKVQKPPAQKAPAPKASGEKA) form a disordered region. The stretch at 169–173 (KKAPA) is one 1-1; approximate repeat. Positions 169 to 188 (KKAPAQKAPAQKAAGQKAAP) are 4 X 5 AA tandem repeats of Q-K-A-[APS]-X. Tandem repeats lie at residues 174-178 (QKAPA), 179-183 (QKAAG), 184-188 (QKAAP), 191-193 (KAQ), and 194-196 (KVQ). The segment at 191–196 (KAQKVQ) is 2 X 3 AA tandem repeats of K-G-Q. Lys202 is modified (N6-succinyllysine).

The protein belongs to the eukaryotic ribosomal protein eL14 family. In terms of assembly, component of the large ribosomal subunit.

It localises to the cytoplasm. In terms of biological role, component of the large ribosomal subunit. The ribosome is a large ribonucleoprotein complex responsible for the synthesis of proteins in the cell. In Sus scrofa (Pig), this protein is Large ribosomal subunit protein eL14 (RPL14).